The following is a 459-amino-acid chain: Transcription factor 7-like 2 (459 aa).

The span at 1-11 (MPQLNGGGGDD) shows a compositional bias: gly residues. A CTNNB1-binding region spans residues 1–53 (MPQLNGGGGDDLGANDELISFKDEGEQEEKNSENSSAERDLADVKSSLVNESE). The segment at 1–96 (MPQLNGGGGD…AKRQDGGLFK (96 aa)) is disordered. The span at 19–43 (ISFKDEGEQEEKNSENSSAERDLAD) shows a compositional bias: basic and acidic residues. Residue Lys-22 forms a Glycyl lysine isopeptide (Lys-Gly) (interchain with G-Cter in SUMO2) linkage. Residues 47 to 56 (SLVNESETNQ) are compositionally biased toward polar residues. Basic and acidic residues predominate over residues 63–91 (EAERRPPPRSESFRDKSRESLEEAAKRQD). 2 positions are modified to phosphothreonine; by NLK: Thr-178 and Thr-189. Positions 178-372 (TPLITYSNEH…RRWHALSREE (195 aa)) are mediates interaction with MAD2L2. The segment covering 295–305 (TVKQESSQSDV) has biased composition (polar residues). Disordered stretches follow at residues 295–327 (TVKQ…KPHI) and 397–418 (RDNY…TNEH). Lys-297 participates in a covalent cross-link: Glycyl lysine isopeptide (Lys-Gly) (interchain with G-Cter in SUMO). Positions 312–323 (KHQDSKKEEEKK) are enriched in basic and acidic residues. A DNA-binding region (HMG box) is located at residues 327–395 (IKKPLNAFML…LHMQLYPGWS (69 aa)). A Nuclear localization signal motif is present at residues 402-408 (KKKKRKR).

Belongs to the TCF/LEF family. As to quaternary structure, interacts with TGFB1I1. Interacts with SPIN1. Interacts with CTNNB1 (via the armadillo repeat); forms stable transcription complex. Interacts with EP300. Interacts with NLK. Interacts with CCDC85B (probably through the HMG box); prevents interaction with CTNNB1. Interacts with TNIK. Interacts with MAD2L2; prevents TCF7L2/TCF4 binding to promZIPK/DAPK3oters, negatively modulating its transcriptional activity. Interacts with ZIPK/DAPK3. Interacts with XIAP/BIRC4 and TLE3. Interacts with DDIT3/CHOP. The CTNNB1 and TCF7L2/TCF4 complex interacts with PML (isoform PML-4). Identified in a complex with CTNNB1 and FERMT2. Interacts with C11orf84/SPINDOC in a SPIN1-dependent manner. Interacts with DAZAP2; the interaction results in localization of DAZAP2 to the nucleus. In terms of processing, phosphorylated at Thr-178 and/or Thr-189 by NLK. Phosphorylation by NLK at these sites inhibits DNA-binding by TCF7L2/TCF4, thereby preventing transcriptional activation of target genes of the canonical Wnt/beta-catenin signaling pathway. Post-translationally, polysumoylated. Sumoylation is enhanced by PIAS family members and desumoylation is enhanced by SENP2. Sumoylation/desumoylation regulates TCF7L2/TCF4 transcription activity in the Wnt/beta-catenin signaling pathway without altering interaction with CTNNB1 nor binding to DNA. As to expression, detected in adult brain and liver, and at lower levels in intestine, with a clear increase from the distal colon to the duodenum. Detected at low levels in heart, lung, kidney, pituitary and testis.

Its subcellular location is the nucleus. The protein localises to the PML body. In terms of biological role, participates in the Wnt signaling pathway and modulates MYC expression by binding to its promoter in a sequence-specific manner. Acts as a repressor in the absence of CTNNB1, and as activator in its presence. Activates transcription from promoters with several copies of the Tcf motif CCTTTGATC in the presence of CTNNB1. TLE1, TLE2, TLE3 and TLE4 repress transactivation mediated by TCF7L2/TCF4 and CTNNB1. Expression of dominant-negative mutants results in cell-cycle arrest in G1. Necessary for the maintenance of the epithelial stem-cell compartment of the small intestine. The chain is Transcription factor 7-like 2 (Tcf7l2) from Mus musculus (Mouse).